The following is a 366-amino-acid chain: UDP-N-acetylenolpyruvoylglucosamine reductase (366 aa).

The FAD-binding PCMH-type domain maps to Val-29–Ser-203. Arg-177 is a catalytic residue. Catalysis depends on Ser-258, which acts as the Proton donor. Glu-358 is a catalytic residue.

It belongs to the MurB family. Requires FAD as cofactor.

The protein resides in the cytoplasm. The catalysed reaction is UDP-N-acetyl-alpha-D-muramate + NADP(+) = UDP-N-acetyl-3-O-(1-carboxyvinyl)-alpha-D-glucosamine + NADPH + H(+). The protein operates within cell wall biogenesis; peptidoglycan biosynthesis. Functionally, cell wall formation. This Mycobacterium ulcerans (strain Agy99) protein is UDP-N-acetylenolpyruvoylglucosamine reductase.